A 61-amino-acid polypeptide reads, in one-letter code: MARKALIVKAQRPQKYKVRAYNRCKICGRPRAYMRKFGMCRICFREHALRGLIPGVTKSSW.

Positions 24, 27, 40, and 43 each coordinate Zn(2+).

This sequence belongs to the universal ribosomal protein uS14 family. Zinc-binding uS14 subfamily. As to quaternary structure, part of the 30S ribosomal subunit. Contacts proteins S3 and S10. Requires Zn(2+) as cofactor.

Binds 16S rRNA, required for the assembly of 30S particles and may also be responsible for determining the conformation of the 16S rRNA at the A site. The protein is Small ribosomal subunit protein uS14 of Roseiflexus sp. (strain RS-1).